Reading from the N-terminus, the 173-residue chain is Shikimate kinase 1 (173 aa).

14 to 19 provides a ligand contact to ATP; the sequence is GAGKST. A Mg(2+)-binding site is contributed by serine 18. 3 residues coordinate substrate: aspartate 36, arginine 60, and glycine 82. ATP is bound at residue arginine 120. Residue arginine 140 coordinates substrate. Glutamine 157 is a binding site for ATP.

The protein belongs to the shikimate kinase family. In terms of assembly, monomer. The cofactor is Mg(2+).

It localises to the cytoplasm. It carries out the reaction shikimate + ATP = 3-phosphoshikimate + ADP + H(+). The protein operates within metabolic intermediate biosynthesis; chorismate biosynthesis; chorismate from D-erythrose 4-phosphate and phosphoenolpyruvate: step 5/7. Functionally, catalyzes the specific phosphorylation of the 3-hydroxyl group of shikimic acid using ATP as a cosubstrate. This is Shikimate kinase 1 from Pectobacterium atrosepticum (strain SCRI 1043 / ATCC BAA-672) (Erwinia carotovora subsp. atroseptica).